Reading from the N-terminus, the 532-residue chain is Phosphoenolpyruvate carboxykinase (ATP) (532 aa).

Substrate is bound by residues arginine 60, tyrosine 194, and lysine 200. ATP is bound by residues lysine 200, histidine 219, and 237 to 245; that span reads GLSGTGKTT. Lysine 200 and histidine 219 together coordinate Mn(2+). Residue aspartate 258 coordinates Mn(2+). The ATP site is built by glutamate 286, arginine 324, and threonine 449. Residue arginine 324 participates in substrate binding.

The protein belongs to the phosphoenolpyruvate carboxykinase (ATP) family. The cofactor is Mn(2+).

It is found in the cytoplasm. The catalysed reaction is oxaloacetate + ATP = phosphoenolpyruvate + ADP + CO2. Its pathway is carbohydrate biosynthesis; gluconeogenesis. Involved in the gluconeogenesis. Catalyzes the conversion of oxaloacetate (OAA) to phosphoenolpyruvate (PEP) through direct phosphoryl transfer between the nucleoside triphosphate and OAA. This chain is Phosphoenolpyruvate carboxykinase (ATP), found in Roseobacter denitrificans (strain ATCC 33942 / OCh 114) (Erythrobacter sp. (strain OCh 114)).